A 374-amino-acid polypeptide reads, in one-letter code: Phosphate-binding protein PstS1 (374 aa).

An N-terminal signal peptide occupies residues 1–23; sequence MKIRLHTLLAVLTAAPLLLAAAG. C24 carries the N-palmitoyl cysteine lipid modification. C24 is lipidated: S-diacylglycerol cysteine. The interval 25–48 is disordered; it reads GSKPPSGSPETGAGAGTVATTPAS. Residues 58-60, S88, D106, and 189-191 each bind phosphate; these read STL and SGD.

The protein belongs to the PstS family. As to quaternary structure, the complex is composed of two ATP-binding proteins (PstB), two transmembrane proteins (PstC and PstA) and a solute-binding protein (PstS).

Its subcellular location is the cell membrane. The protein resides in the secreted. Functions in inorganic phosphate uptake, a phosphate-binding protein, although probably not the main uptake protein under phosphate starvation. Part of the ABC transporter complex PstSACB involved in phosphate import. Functionally, a host TLR2 agonist (toll-like receptor), requires both host TLR1 and TLR2 as coreceptors. This Mycobacterium bovis (strain BCG / Pasteur 1173P2) protein is Phosphate-binding protein PstS1 (pstS1).